Here is a 141-residue protein sequence, read N- to C-terminus: MRIMGLDLGEKRIGIAFSDPMGWTAQGHSILQRKGLKKDLSYLQELCQEFQVEKIVLGLPLNMNGTMGPKALETQEFARALQEALKIPVDFWDERLSSKSAERVLLEADLSRKRRKELIDKIAAVHILQAYLDGGSLGKDY.

Belongs to the YqgF nuclease family.

It is found in the cytoplasm. In terms of biological role, could be a nuclease involved in processing of the 5'-end of pre-16S rRNA. The sequence is that of Putative pre-16S rRNA nuclease from Syntrophomonas wolfei subsp. wolfei (strain DSM 2245B / Goettingen).